The sequence spans 497 residues: Protein nucleotidyltransferase YdiU (497 aa).

Residues Gly-88, Gly-90, Arg-91, Lys-110, Asp-122, Gly-123, Arg-173, and Arg-180 each contribute to the ATP site. The active-site Proton acceptor is the Asp-249. Mg(2+) contacts are provided by Asn-250 and Asp-259. Residue Asp-259 participates in ATP binding.

This sequence belongs to the SELO family. It depends on Mg(2+) as a cofactor. Mn(2+) serves as cofactor.

The catalysed reaction is L-seryl-[protein] + ATP = 3-O-(5'-adenylyl)-L-seryl-[protein] + diphosphate. The enzyme catalyses L-threonyl-[protein] + ATP = 3-O-(5'-adenylyl)-L-threonyl-[protein] + diphosphate. It catalyses the reaction L-tyrosyl-[protein] + ATP = O-(5'-adenylyl)-L-tyrosyl-[protein] + diphosphate. It carries out the reaction L-histidyl-[protein] + UTP = N(tele)-(5'-uridylyl)-L-histidyl-[protein] + diphosphate. The catalysed reaction is L-seryl-[protein] + UTP = O-(5'-uridylyl)-L-seryl-[protein] + diphosphate. The enzyme catalyses L-tyrosyl-[protein] + UTP = O-(5'-uridylyl)-L-tyrosyl-[protein] + diphosphate. Its function is as follows. Nucleotidyltransferase involved in the post-translational modification of proteins. It can catalyze the addition of adenosine monophosphate (AMP) or uridine monophosphate (UMP) to a protein, resulting in modifications known as AMPylation and UMPylation. This chain is Protein nucleotidyltransferase YdiU, found in Methylorubrum extorquens (strain CM4 / NCIMB 13688) (Methylobacterium extorquens).